A 679-amino-acid chain; its full sequence is G-protein-signaling modulator 2 (679 aa).

The tract at residues 22–357 (ASCLELALEG…HLEISREVGD (336 aa)) is important for interaction with NUMA1; INSC and FRMPD1. 8 TPR repeats span residues 24 to 57 (CLELALEGERLCKSGDCRAGVSFFEAAVQVGTED), 62 to 95 (SAIYSQLGNAYFYLHDYAKALEYHHHDLTLARTI), 102 to 135 (AKASGNLGNTLKVLGNFDEAIVCCQRHLDISREL), 142 to 184 (ARAL…AVDL), 202 to 235 (GRAFGNLGNTHYLLGNFRDAVIAHEQRLLIAKEF), 242 to 275 (RRAYSNLGNAYIFLGEFETASEYYKKTLLLARQL), 282 to 315 (AQSCYSLGNTYTLLQDYEKAIDYHLKHLAIAQEL), and 322 to 355 (GRACWSLGNAYTALGNHDQAMHFAEKHLEISREV). Serine 408 and serine 484 each carry phosphoserine. Threonine 487 carries the phosphothreonine modification. Residues 490–512 (DEGFFDLLRRFQSNRMDDQRCHL) enclose the GoLoco 1 domain. Phosphoserine occurs at positions 540 and 564. 3 GoLoco domains span residues 543–565 (TDEFLDLLASSQSRRLDDQRASF), 594–616 (DEDFFDILVKCQGSRLDDQRCAP), and 628–650 (DEDFFSLILRSQAKRMDEQRVLL). The GDP site is built by arginine 608, arginine 613, arginine 642, and arginine 647.

The protein belongs to the GPSM family. Interacts with the dynein-dynactin complex; this interaction is inhibited in a PLK1-dependent manner. Part of a spindle orientation complex at least composed of GNAI1, GPSM2 and NUMA1. Interacts with LLGL2. Interacts (via TPR repeat region) with INSC/inscuteable. Interacts (via TPR repeat region) with NUMA1 (via C-terminus); this interaction is direct, inhibited in a PLK1-dependent manner and promotes spindle pole organization. INSC and NUMA1 compete for the same binding site, but INSC has higher affinity and can displace NUMA1 (in vitro). Interacts with GNAI2. Interacts (via GoLoco domains) with the GDP-bound form of GNAI1 and GNAI3; has much lower affinity for the GTP-bound form. Interaction with GDP-bound GNAI3 strongly enhances the affinity for NUMA1. Interacts (via TPR repeat region) with FRMPD1. INSC and FRMPD1 compete for the same binding site, but INSC has higher affinity and can displace FRMPD1 (in vitro). Interacts (via TPR repeat region) with FRMPD4. Identified in a complex with INSC and F2RL2/Par3. Interacts with TASOR. Detected in brain and liver (at protein level). Detected in brain, spleen, liver and testis, and at lower levels in heart, lung and kidney. Enriched in the ventricular zone of the developing central nervous systems. Expressed in proximal colon, ileum, ovary, Sertoli cells of the testis and granular cells within the cerebellum.

The protein resides in the cytoplasm. The protein localises to the cell cortex. It is found in the cytoskeleton. It localises to the spindle pole. Its subcellular location is the lateral cell membrane. In terms of biological role, plays an important role in mitotic spindle pole organization via its interaction with NUMA1. Required for cortical dynein-dynactin complex recruitment during metaphase. Plays a role in metaphase spindle orientation. Plays an important role in asymmetric cell divisions. Has guanine nucleotide dissociation inhibitor (GDI) activity towards G(i) alpha proteins, such as GNAI1 and GNAI3, and thereby regulates their activity. The chain is G-protein-signaling modulator 2 (Gpsm2) from Mus musculus (Mouse).